Reading from the N-terminus, the 177-residue chain is Large ribosomal subunit protein uL6 (177 aa).

The protein belongs to the universal ribosomal protein uL6 family. In terms of assembly, part of the 50S ribosomal subunit.

Its function is as follows. This protein binds to the 23S rRNA, and is important in its secondary structure. It is located near the subunit interface in the base of the L7/L12 stalk, and near the tRNA binding site of the peptidyltransferase center. This chain is Large ribosomal subunit protein uL6, found in Sinorhizobium fredii (strain NBRC 101917 / NGR234).